The sequence spans 84 residues: Metallothionein-like protein 2C (84 aa).

The protein belongs to the metallothionein superfamily. Type 15 family.

It localises to the cytoplasm. The protein resides in the cytosol. In terms of biological role, metallothioneins have a high content of cysteine residues that bind various heavy metals. Acts as a reactive oxygen species (ROS) scavenger in the cytosol. Possesses superoxide anion and hydroxyl radical scavenging activities in vitro. Plays a role during root development, lateral root initiation and seed embryo germination, possibly by regulating levels of cytokinin. The polypeptide is Metallothionein-like protein 2C (MT2C) (Oryza sativa subsp. indica (Rice)).